The following is a 316-amino-acid chain: Probable cell division protein WhiA (316 aa).

The segment at residues 275–309 is a DNA-binding region (H-T-H motif); that stretch reads TLKELGEMVSGGKISKSGINHRLRKIDEIAEKLRA.

It belongs to the WhiA family.

In terms of biological role, involved in cell division and chromosome segregation. In Bacillus cereus (strain G9842), this protein is Probable cell division protein WhiA.